A 253-amino-acid polypeptide reads, in one-letter code: Ubiquinone biosynthesis O-methyltransferase (253 aa).

R47, G78, D99, and M141 together coordinate S-adenosyl-L-methionine.

The protein belongs to the methyltransferase superfamily. UbiG/COQ3 family.

It catalyses the reaction a 3-demethylubiquinol + S-adenosyl-L-methionine = a ubiquinol + S-adenosyl-L-homocysteine + H(+). The catalysed reaction is a 3-(all-trans-polyprenyl)benzene-1,2-diol + S-adenosyl-L-methionine = a 2-methoxy-6-(all-trans-polyprenyl)phenol + S-adenosyl-L-homocysteine + H(+). It functions in the pathway cofactor biosynthesis; ubiquinone biosynthesis. Functionally, O-methyltransferase that catalyzes the 2 O-methylation steps in the ubiquinone biosynthetic pathway. The chain is Ubiquinone biosynthesis O-methyltransferase from Bradyrhizobium sp. (strain ORS 278).